Here is a 616-residue protein sequence, read N- to C-terminus: Methylmalonyl-CoA mutase small subunit (616 aa).

The protein belongs to the methylmalonyl-CoA mutase family. In terms of assembly, heterodimer of an alpha and a beta chain. Requires adenosylcob(III)alamin as cofactor.

The enzyme catalyses (R)-methylmalonyl-CoA = succinyl-CoA. Its pathway is metabolic intermediate metabolism; propanoyl-CoA degradation; succinyl-CoA from propanoyl-CoA: step 3/3. In terms of biological role, catalyzes the isomerization of succinyl-CoA to methylmalonyl-CoA during synthesis of propionate from tricarboxylic acid-cycle intermediates. This conversion most likely represents an important source of building blocks for polyketide antibiotic biosynthesis. It is unable to catalyze the conversion of isobutyryl-CoA into N-butyryl-CoA. The protein is Methylmalonyl-CoA mutase small subunit (mutA) of Streptomyces virginiae (Streptomyces cinnamonensis).